The primary structure comprises 237 residues: uncharacterized protein (237 aa).

The segment at residues 1–25 is a signal peptide (tat-type signal); that stretch reads MRHIFQRLLPRRLWLAGLPCLALLG. Residues 201–237 form a disordered region; the sequence is IERQLSTRKPAGNFSPDTPHESEKPAPSTHEVTPDEP.

Exported by the Tat system. The position of the signal peptide cleavage has not been experimentally proven. Can also be exported by the Sec system.

This is an uncharacterized protein from Escherichia coli (strain K12).